A 309-amino-acid chain; its full sequence is Ferrochelatase (309 aa).

Fe cation contacts are provided by His187 and Glu265.

The protein belongs to the ferrochelatase family.

It is found in the cytoplasm. The catalysed reaction is heme b + 2 H(+) = protoporphyrin IX + Fe(2+). Its pathway is porphyrin-containing compound metabolism; protoheme biosynthesis; protoheme from protoporphyrin-IX: step 1/1. In terms of biological role, catalyzes the ferrous insertion into protoporphyrin IX. This Nitratiruptor sp. (strain SB155-2) protein is Ferrochelatase.